Here is a 262-residue protein sequence, read N- to C-terminus: tRNA pseudouridine synthase A (262 aa).

Catalysis depends on D51, which acts as the Nucleophile. Position 109 (Y109) interacts with substrate.

The protein belongs to the tRNA pseudouridine synthase TruA family. As to quaternary structure, homodimer.

The catalysed reaction is uridine(38/39/40) in tRNA = pseudouridine(38/39/40) in tRNA. Functionally, formation of pseudouridine at positions 38, 39 and 40 in the anticodon stem and loop of transfer RNAs. This is tRNA pseudouridine synthase A from Actinobacillus pleuropneumoniae serotype 3 (strain JL03).